Here is a 141-residue protein sequence, read N- to C-terminus: Molybdopterin synthase catalytic subunit 2 (141 aa).

Substrate-binding positions include 37 to 39 (MIR), 103 to 104 (HR), K119, and 126 to 128 (KHQ).

Belongs to the MoaE family. As to quaternary structure, heterotetramer of 2 MoaD subunits and 2 MoaE subunits. Also stable as homodimer. The enzyme changes between these two forms during catalysis.

The enzyme catalyses 2 [molybdopterin-synthase sulfur-carrier protein]-C-terminal-Gly-aminoethanethioate + cyclic pyranopterin phosphate + H2O = molybdopterin + 2 [molybdopterin-synthase sulfur-carrier protein]-C-terminal Gly-Gly + 2 H(+). It participates in cofactor biosynthesis; molybdopterin biosynthesis. Its function is as follows. Converts molybdopterin precursor Z into molybdopterin. This requires the incorporation of two sulfur atoms into precursor Z to generate a dithiolene group. The sulfur is provided by MoaD. This Mycobacterium tuberculosis (strain CDC 1551 / Oshkosh) protein is Molybdopterin synthase catalytic subunit 2 (moaE2).